A 190-amino-acid chain; its full sequence is Large ribosomal subunit protein bL25 (190 aa).

This sequence belongs to the bacterial ribosomal protein bL25 family. CTC subfamily. In terms of assembly, part of the 50S ribosomal subunit; part of the 5S rRNA/L5/L18/L25 subcomplex. Contacts the 5S rRNA. Binds to the 5S rRNA independently of L5 and L18.

Its function is as follows. This is one of the proteins that binds to the 5S RNA in the ribosome where it forms part of the central protuberance. The chain is Large ribosomal subunit protein bL25 from Neisseria meningitidis serogroup C (strain 053442).